Here is a 418-residue protein sequence, read N- to C-terminus: Serine hydroxymethyltransferase (418 aa).

Residues L121 and 125-127 (GHL) contribute to the (6S)-5,6,7,8-tetrahydrofolate site. N6-(pyridoxal phosphate)lysine is present on K230. (6S)-5,6,7,8-tetrahydrofolate-binding positions include E246 and 355–357 (SPF).

The protein belongs to the SHMT family. In terms of assembly, homodimer. Pyridoxal 5'-phosphate serves as cofactor.

Its subcellular location is the cytoplasm. The enzyme catalyses (6R)-5,10-methylene-5,6,7,8-tetrahydrofolate + glycine + H2O = (6S)-5,6,7,8-tetrahydrofolate + L-serine. The protein operates within one-carbon metabolism; tetrahydrofolate interconversion. Its pathway is amino-acid biosynthesis; glycine biosynthesis; glycine from L-serine: step 1/1. Its function is as follows. Catalyzes the reversible interconversion of serine and glycine with tetrahydrofolate (THF) serving as the one-carbon carrier. This reaction serves as the major source of one-carbon groups required for the biosynthesis of purines, thymidylate, methionine, and other important biomolecules. Also exhibits THF-independent aldolase activity toward beta-hydroxyamino acids, producing glycine and aldehydes, via a retro-aldol mechanism. The sequence is that of Serine hydroxymethyltransferase from Streptococcus pneumoniae (strain 70585).